Here is a 1556-residue protein sequence, read N- to C-terminus: Ferredoxin-dependent glutamate synthase 2 (1556 aa).

The active-site For GATase activity is Cys-37. The region spanning 37-431 (CGVGFIANLR…PGQMIAVDLA (395 aa)) is the Glutamine amidotransferase type-2 domain. Cys-1173, Cys-1179, and Cys-1184 together coordinate [3Fe-4S] cluster. The disordered stretch occupies residues 1533–1556 (PSEKDSPEANGDVSLTGEKTLTSV).

Belongs to the glutamate synthase family. It depends on [3Fe-4S] cluster as a cofactor. FAD serves as cofactor. Requires FMN as cofactor.

It carries out the reaction 2 oxidized [2Fe-2S]-[ferredoxin] + 2 L-glutamate = L-glutamine + 2 reduced [2Fe-2S]-[ferredoxin] + 2-oxoglutarate + 2 H(+). Its pathway is amino-acid biosynthesis; L-glutamate biosynthesis via GLT pathway; L-glutamate from 2-oxoglutarate and L-glutamine (ferredoxin route): step 1/1. It functions in the pathway energy metabolism; nitrogen metabolism. This chain is Ferredoxin-dependent glutamate synthase 2 (gltS), found in Synechocystis sp. (strain ATCC 27184 / PCC 6803 / Kazusa).